The sequence spans 380 residues: Probable pectin lyase A (380 aa).

The signal sequence occupies residues Met-1–Ala-20. Intrachain disulfides connect Cys-83-Cys-102 and Cys-92-Cys-226. The N-linked (GlcNAc...) asparagine glycan is linked to Asn-129. Arg-256 is an active-site residue. A disulfide bridge links Cys-323 with Cys-331.

Belongs to the polysaccharide lyase 1 family.

The protein localises to the secreted. It carries out the reaction Eliminative cleavage of (1-&gt;4)-alpha-D-galacturonan methyl ester to give oligosaccharides with 4-deoxy-6-O-methyl-alpha-D-galact-4-enuronosyl groups at their non-reducing ends.. Functionally, pectinolytic enzymes consist of four classes of enzymes: pectin lyase, polygalacturonase, pectin methylesterase and rhamnogalacturonase. Among pectinolytic enzymes, pectin lyase is the most important in depolymerization of pectin, since it cleaves internal glycosidic bonds of highly methylated pectins. In Aspergillus fumigatus (strain ATCC MYA-4609 / CBS 101355 / FGSC A1100 / Af293) (Neosartorya fumigata), this protein is Probable pectin lyase A (pelA).